We begin with the raw amino-acid sequence, 277 residues long: 14-3-3 protein (277 aa).

Residues 252–277 (LQTQEQQQQPVGEGAEAPKVEATEQQ) form a disordered region. Positions 267–277 (EAPKVEATEQQ) are enriched in basic and acidic residues.

Belongs to the 14-3-3 family.

This chain is 14-3-3 protein, found in Eimeria tenella (Coccidian parasite).